We begin with the raw amino-acid sequence, 148 residues long: Deoxyuridine 5'-triphosphate nucleotidohydrolase (148 aa).

Serine 69, glycine 82, aspartate 85, tyrosine 88, arginine 137, phenylalanine 142, and glycine 143 together coordinate dUMP.

This sequence belongs to the dUTPase family. Homotrimer. Mg(2+) is required as a cofactor.

The catalysed reaction is dUTP + H2O = dUMP + diphosphate + H(+). Its pathway is pyrimidine metabolism; dUMP biosynthesis; dUMP from dCTP (dUTP route): step 2/2. Involved in nucleotide metabolism via production of dUMP, the immediate precursor of thymidine nucleotides, and decreases the intracellular concentration of dUTP so that uracil cannot be incorporated into DNA. This is Deoxyuridine 5'-triphosphate nucleotidohydrolase (DUT1) from Kluyveromyces lactis (strain ATCC 8585 / CBS 2359 / DSM 70799 / NBRC 1267 / NRRL Y-1140 / WM37) (Yeast).